The chain runs to 52 residues: UPF0181 protein VPA0916 (52 aa).

It belongs to the UPF0181 family.

This chain is UPF0181 protein VPA0916, found in Vibrio parahaemolyticus serotype O3:K6 (strain RIMD 2210633).